The sequence spans 429 residues: Cyclin-B2-1 (429 aa).

The protein belongs to the cyclin family. Cyclin AB subfamily. Interacts with CDC20-1 and CDC20-2. As to expression, expressed in roots, stems, leaves, flowers and siliques.

This Arabidopsis thaliana (Mouse-ear cress) protein is Cyclin-B2-1 (CYCB2-1).